Here is a 444-residue protein sequence, read N- to C-terminus: Citrate-proton symporter (444 aa).

The Cytoplasmic portion of the chain corresponds to Met-1–Gln-41. Residues Phe-42 to Ser-62 form a helical membrane-spanning segment. At Ser-63–Phe-72 the chain is on the periplasmic side. Residues Ala-73 to Ile-93 form a helical membrane-spanning segment. The Cytoplasmic portion of the chain corresponds to Asp-94–Phe-114. The chain crosses the membrane as a helical span at residues Leu-115–Ile-135. The Periplasmic portion of the chain corresponds to Gly-136 to Arg-137. The helical transmembrane segment at Leu-138–Ile-158 threads the bilayer. At Ala-159 to Val-177 the chain is on the cytoplasmic side. Residues Ala-178 to Ile-198 form a helical membrane-spanning segment. Position 199 (Ser-199) is a topological domain, periplasmic. A helical membrane pass occupies residues Asp-200–Leu-220. Residues Arg-221–Gln-251 are Cytoplasmic-facing. Residues Val-252–Val-272 form a helical membrane-spanning segment. Residues Tyr-273–Ser-289 lie on the Periplasmic side of the membrane. A helical transmembrane segment spans residues Leu-290 to Leu-310. At Ser-311–Ser-318 the chain is on the cytoplasmic side. A helical transmembrane segment spans residues Val-319–Ala-339. Position 340 (Asn-340) is a topological domain, periplasmic. The helical transmembrane segment at Ala-341 to Tyr-361 threads the bilayer. Residues Asn-362–Val-379 are Cytoplasmic-facing. A helical membrane pass occupies residues Ala-380–Ile-400. Over Ser-401 to Lys-411 the chain is Periplasmic. The helical transmembrane segment at Ala-412–Leu-432 threads the bilayer. The Cytoplasmic segment spans residues Tyr-433 to Arg-444.

Belongs to the major facilitator superfamily. Metabolite:H+ Symporter (MHS) family (TC 2.A.1.6) family.

The protein resides in the cell inner membrane. Uptake of citrate across the boundary membrane with the concomitant transport of protons into the cell (symport system). This Klebsiella pneumoniae protein is Citrate-proton symporter (citH).